Consider the following 241-residue polypeptide: Agamous-like MADS-box protein AGL8 homolog (241 aa).

Positions 3-57 constitute an MADS-box domain; sequence RGRVQLKRIENKINRQVTFSKRRSGLLKKAHEISVLCDAEVALVIFSSKGKLFEY. The K-box domain maps to 88–178; the sequence is SENWVLEHAK…LKKIKEREKN (91 aa).

The protein resides in the nucleus. Functionally, probable transcription factor. The chain is Agamous-like MADS-box protein AGL8 homolog (AGL8) from Sinapis alba (White mustard).